We begin with the raw amino-acid sequence, 536 residues long: Chaperonin GroEL (536 aa).

Residues 29–32 (TLGP), 86–90 (DGTTT), Gly-412, and Asp-493 contribute to the ATP site.

Belongs to the chaperonin (HSP60) family. In terms of assembly, forms a cylinder of 14 subunits composed of two heptameric rings stacked back-to-back. Interacts with the co-chaperonin GroES.

The protein resides in the cytoplasm. The enzyme catalyses ATP + H2O + a folded polypeptide = ADP + phosphate + an unfolded polypeptide.. Together with its co-chaperonin GroES, plays an essential role in assisting protein folding. The GroEL-GroES system forms a nano-cage that allows encapsulation of the non-native substrate proteins and provides a physical environment optimized to promote and accelerate protein folding. This is Chaperonin GroEL from Aster yellows witches'-broom phytoplasma (strain AYWB).